The chain runs to 118 residues: Deoxynogalonate monooxygenase (118 aa).

One can recognise an ABM domain in the interval 14 to 100 (VTFVNRFTVH…ALSTSEHGLF (87 aa)).

In terms of assembly, homodimer.

It carries out the reaction deoxynogalonate + O2 = nogalonate + H2O + H(+). It participates in antibiotic biosynthesis. Involved in the biosynthesis of the anthracycline (aromatic polyketide) antibiotic nogalamycin. Catalyzes the oxygenation of 12-deoxy-nogalonic acid at position 12 to yield nogalonic acid. The polypeptide is Deoxynogalonate monooxygenase (Streptomyces nogalater).